The following is a 470-amino-acid chain: Glycine--tRNA ligase (470 aa).

2 residues coordinate substrate: arginine 94 and glutamate 183. ATP-binding positions include arginine 215–glutamate 217, phenylalanine 225–phenylalanine 230, glutamate 298–isoleucine 299, and glycine 342–arginine 345. A substrate-binding site is contributed by phenylalanine 230 to glutamate 234. Glutamate 338 to glycine 342 is a binding site for substrate.

The protein belongs to the class-II aminoacyl-tRNA synthetase family. As to quaternary structure, homodimer.

It is found in the cytoplasm. The enzyme catalyses tRNA(Gly) + glycine + ATP = glycyl-tRNA(Gly) + AMP + diphosphate. Catalyzes the attachment of glycine to tRNA(Gly). In Chlorobaculum tepidum (strain ATCC 49652 / DSM 12025 / NBRC 103806 / TLS) (Chlorobium tepidum), this protein is Glycine--tRNA ligase.